The following is a 240-amino-acid chain: Large ribosomal subunit protein uL2 (240 aa).

The segment covering Met1–Pro20 has biased composition (polar residues). 2 disordered regions span residues Met1–Phe33 and Pro204–Arg240. Basic residues-rich tracts occupy residues Thr21 to Tyr30 and Ser224 to Arg240.

It belongs to the universal ribosomal protein uL2 family. As to quaternary structure, part of the 50S ribosomal subunit. Forms a bridge to the 30S subunit in the 70S ribosome.

One of the primary rRNA binding proteins. Required for association of the 30S and 50S subunits to form the 70S ribosome, for tRNA binding and peptide bond formation. It has been suggested to have peptidyltransferase activity; this is somewhat controversial. Makes several contacts with the 16S rRNA in the 70S ribosome. The polypeptide is Large ribosomal subunit protein uL2 (Methanococcus aeolicus (strain ATCC BAA-1280 / DSM 17508 / OCM 812 / Nankai-3)).